The sequence spans 282 residues: Nucleotide-binding protein ABO_0549 (282 aa).

Position 8 to 15 (8 to 15) interacts with ATP; sequence GRSGSGKT. Residue 59 to 62 participates in GTP binding; the sequence is DARN.

This sequence belongs to the RapZ-like family.

Its function is as follows. Displays ATPase and GTPase activities. In Alcanivorax borkumensis (strain ATCC 700651 / DSM 11573 / NCIMB 13689 / SK2), this protein is Nucleotide-binding protein ABO_0549.